Reading from the N-terminus, the 335-residue chain is NADH-quinone oxidoreductase subunit H (335 aa).

8 consecutive transmembrane segments (helical) span residues 12-32 (IIAV…GALL), 81-101 (VIFT…FAVI), 114-134 (IGLL…LFAG), 154-174 (VSYE…VGSF), 187-207 (LWFI…GVAV), 238-258 (FFVG…TLFF), 270-290 (SLAF…FILL), and 307-327 (WKFC…IVLL).

Belongs to the complex I subunit 1 family. NDH-1 is composed of 13 different subunits. Subunits NuoA, H, J, K, L, M, N constitute the membrane sector of the complex.

The protein localises to the cell inner membrane. The enzyme catalyses a quinone + NADH + 5 H(+)(in) = a quinol + NAD(+) + 4 H(+)(out). NDH-1 shuttles electrons from NADH, via FMN and iron-sulfur (Fe-S) centers, to quinones in the respiratory chain. The immediate electron acceptor for the enzyme in this species is believed to be ubiquinone. Couples the redox reaction to proton translocation (for every two electrons transferred, four hydrogen ions are translocated across the cytoplasmic membrane), and thus conserves the redox energy in a proton gradient. This subunit may bind ubiquinone. The polypeptide is NADH-quinone oxidoreductase subunit H (Pseudomonas syringae pv. tomato (strain ATCC BAA-871 / DC3000)).